A 200-amino-acid chain; its full sequence is dITP/XTP pyrophosphatase (200 aa).

5–10 (TRNEGK) lines the substrate pocket. The Proton acceptor role is filled by Asp67. Asp67 contributes to the Mg(2+) binding site. Substrate contacts are provided by residues Ser68, 151-154 (FGYD), Lys174, and 179-180 (HR).

Belongs to the HAM1 NTPase family. In terms of assembly, homodimer. The cofactor is Mg(2+).

It catalyses the reaction XTP + H2O = XMP + diphosphate + H(+). The enzyme catalyses dITP + H2O = dIMP + diphosphate + H(+). It carries out the reaction ITP + H2O = IMP + diphosphate + H(+). Pyrophosphatase that catalyzes the hydrolysis of nucleoside triphosphates to their monophosphate derivatives, with a high preference for the non-canonical purine nucleotides XTP (xanthosine triphosphate), dITP (deoxyinosine triphosphate) and ITP. Seems to function as a house-cleaning enzyme that removes non-canonical purine nucleotides from the nucleotide pool, thus preventing their incorporation into DNA/RNA and avoiding chromosomal lesions. The protein is dITP/XTP pyrophosphatase of Streptococcus pneumoniae serotype 4 (strain ATCC BAA-334 / TIGR4).